The following is a 212-amino-acid chain: Putative protein phosphatase 2C 53 (212 aa).

One can recognise a PPM-type phosphatase domain in the interval 1–208 (MEDRFSAITN…DDISVMLIPL (208 aa)). Asp-199 provides a ligand contact to Mn(2+).

The protein belongs to the PP2C family. It depends on Mg(2+) as a cofactor. The cofactor is Mn(2+).

It carries out the reaction O-phospho-L-seryl-[protein] + H2O = L-seryl-[protein] + phosphate. It catalyses the reaction O-phospho-L-threonyl-[protein] + H2O = L-threonyl-[protein] + phosphate. This is Putative protein phosphatase 2C 53 from Arabidopsis thaliana (Mouse-ear cress).